The primary structure comprises 756 residues: Protease KEX1 (756 aa).

The first 24 residues, 1–24 (MILSSQLMLALIAVSGYGKAMQVP), serve as a signal peptide directing secretion. Residues Asn121, Asn144, and Asn152 are each glycosylated (N-linked (GlcNAc...) asparagine). Residues 130–440 (QWHLINPNYP…FGKLDAYNIV (311 aa)) enclose the Peptidase S8 domain. Active-site charge relay system residues include Asp164 and His202. 2 cysteine pairs are disulfide-bonded: Cys218–Cys365 and Cys310–Cys340. Catalysis depends on Ser373, which acts as the Charge relay system. Asn392 and Asn538 each carry an N-linked (GlcNAc...) asparagine glycan. One can recognise a P/Homo B domain in the interval 449–583 (VNPQGWLYLP…RLKMFGETID (135 aa)). The tract at residues 599–632 (AEVKSTESKTTTPTAQTSSFTTTSGEETSGANKL) is disordered. A compositionally biased stretch (low complexity) spans 606–628 (SKTTTPTAQTSSFTTTSGEETSG). Residues 641–661 (LYLAIFVIGAIVIIIYYLFFL) form a helical membrane-spanning segment. The interval 715–756 (EEELSPRESSSNNPFGNESLESFDNSPDHTSNLLGQNSIPNK) is disordered. Positions 721–756 (RESSSNNPFGNESLESFDNSPDHTSNLLGQNSIPNK) are enriched in polar residues.

The protein belongs to the peptidase S8 family. Furin subfamily. The cofactor is Ca(2+).

It localises to the membrane. Probably involved in the processing of the precursor of m1-toxin and alpha-factor. In Kluyveromyces lactis (strain ATCC 8585 / CBS 2359 / DSM 70799 / NBRC 1267 / NRRL Y-1140 / WM37) (Yeast), this protein is Protease KEX1 (KEX1).